Consider the following 1025-residue polypeptide: Dihydropyrimidine dehydrogenase [NADP(+)] (1025 aa).

Residues 69–100 enclose the 4Fe-4S ferredoxin-type 1 domain; the sequence is ERGALREAVRCLKCADAPCQKSCPTSLDIKSF. Residues C79, C82, C87, and C91 each contribute to the [4Fe-4S] cluster site. V129 is a binding site for FAD. C130, C136, C140, and Q156 together coordinate [4Fe-4S] cluster. Residues 194-198, 218-226, and R235 contribute to the FAD site; these read GAGPA and EKQEYVGGL. NADP(+) is bound by residues 340 to 343, 364 to 365, and R371; these read AGDT and RK. K384 is modified (N6-acetyllysine). NADP(+)-binding positions include 437-439 and 481-487; these read PFG and DVVGMAN. 480–489 is a binding site for FAD; the sequence is GDVVGMANTT. FMN is bound by residues S550 and 574–575; that span reads KT. Substrate-binding positions include N609 and 668 to 670; that span reads NLS. C671 serves as the catalytic Proton acceptor. Residue K709 participates in FMN binding. 736-737 contacts substrate; sequence NT. Residues G767, 793–795, and 816–817 each bind FMN; these read TGG and CS. Phosphoserine is present on S905. 2 consecutive 4Fe-4S ferredoxin-type domains span residues 944–976 and 978–1007; these read VVAL…FDPE and HLPT…MVSR. Residues C953, C956, C959, C963, C986, C989, C992, and C996 each contribute to the [4Fe-4S] cluster site.

The protein belongs to the dihydropyrimidine dehydrogenase family. Homodimer. FAD is required as a cofactor. The cofactor is FMN. It depends on [4Fe-4S] cluster as a cofactor.

It localises to the cytoplasm. It carries out the reaction 5,6-dihydrouracil + NADP(+) = uracil + NADPH + H(+). The enzyme catalyses 5,6-dihydrothymine + NADP(+) = thymine + NADPH + H(+). Its pathway is amino-acid biosynthesis; beta-alanine biosynthesis. With respect to regulation, inactivated by 5-iodouracil. Its function is as follows. Involved in pyrimidine base degradation. Catalyzes the reduction of uracil and thymine. Also involved the degradation of the chemotherapeutic drug 5-fluorouracil. This chain is Dihydropyrimidine dehydrogenase [NADP(+)], found in Rattus norvegicus (Rat).